Consider the following 93-residue polypeptide: Putative pterin-4-alpha-carbinolamine dehydratase (93 aa).

The protein belongs to the pterin-4-alpha-carbinolamine dehydratase family.

The enzyme catalyses (4aS,6R)-4a-hydroxy-L-erythro-5,6,7,8-tetrahydrobiopterin = (6R)-L-erythro-6,7-dihydrobiopterin + H2O. This is Putative pterin-4-alpha-carbinolamine dehydratase from Sulfurisphaera tokodaii (strain DSM 16993 / JCM 10545 / NBRC 100140 / 7) (Sulfolobus tokodaii).